A 206-amino-acid chain; its full sequence is A-type ATP synthase subunit E (206 aa).

The protein belongs to the V-ATPase E subunit family. In terms of assembly, has multiple subunits with at least A(3), B(3), C, D, E, F, H, I and proteolipid K(x).

The protein localises to the cell membrane. Its function is as follows. Component of the A-type ATP synthase that produces ATP from ADP in the presence of a proton gradient across the membrane. The protein is A-type ATP synthase subunit E of Methanothermobacter thermautotrophicus (strain ATCC 29096 / DSM 1053 / JCM 10044 / NBRC 100330 / Delta H) (Methanobacterium thermoautotrophicum).